The chain runs to 266 residues: PDZ domain-containing protein 9 (266 aa).

Residues lysine 27–arginine 109 enclose the PDZ domain.

This chain is PDZ domain-containing protein 9 (Pdzd9), found in Mus musculus (Mouse).